The sequence spans 221 residues: MKSQFLLKVWVVCVGALLCRCGGARAPQNTGGTKAVEDYHIGVMTGPGSHSSHDVVAAKRACAMYGAVGDGHRGCILHVTYPEDFVNRQDETVSRLLAFADDPLMGAIVVSEGIHGTAEAFNKIRAKRSDIMLFVGDPHEYPELIQKSADIVVSDDYAFGGYAIPWAAKKMGARTLVHVSFPRHLSKAELRTRRQVMEAVCADIGIEFASEEAPDPAGVRC.

This is an uncharacterized protein from Treponema pallidum (strain Nichols).